The chain runs to 242 residues: NAD-dependent protein deacetylase (242 aa).

Residues 1–242 (MQQFEEVHSI…EFVEGLSSRK (242 aa)) enclose the Deacetylase sirtuin-type domain. 8 residues coordinate NAD(+): Ala-23, Thr-27, Phe-34, Arg-35, Gln-102, Ile-104, Asp-105, and His-120. Phe-34 serves as a coordination point for nicotinamide. Nicotinamide-binding residues include Ile-104 and Asp-105. The active-site Proton acceptor is the His-120. The Zn(2+) site is built by Cys-128, Cys-131, Cys-148, and Cys-151. NAD(+) contacts are provided by Thr-187, Ser-188, Asn-213, and Ile-231.

Belongs to the sirtuin family. Class U subfamily. Zn(2+) is required as a cofactor.

Its subcellular location is the cytoplasm. The enzyme catalyses N(6)-acetyl-L-lysyl-[protein] + NAD(+) + H2O = 2''-O-acetyl-ADP-D-ribose + nicotinamide + L-lysyl-[protein]. Its function is as follows. NAD-dependent protein deacetylase which modulates the activities of several enzymes which are inactive in their acetylated form. The sequence is that of NAD-dependent protein deacetylase from Bacillus cereus (strain ATCC 10987 / NRS 248).